Reading from the N-terminus, the 121-residue chain is MARIAGVDIPRDKRIEVALTYIYGIGSTRAKTILTKAGVNPDIRVKDLEDNDVQKLRNATESFTIEGDLRRQEGMALKRLQDIGCLRGRRHRMSLPVRGQRTRTNARTRRGARKTVAGKKK.

The segment at 97 to 121 is disordered; that stretch reads VRGQRTRTNARTRRGARKTVAGKKK. Residues 100 to 121 are compositionally biased toward basic residues; that stretch reads QRTRTNARTRRGARKTVAGKKK.

It belongs to the universal ribosomal protein uS13 family. As to quaternary structure, part of the 30S ribosomal subunit. Forms a loose heterodimer with protein S19. Forms two bridges to the 50S subunit in the 70S ribosome.

Its function is as follows. Located at the top of the head of the 30S subunit, it contacts several helices of the 16S rRNA. In the 70S ribosome it contacts the 23S rRNA (bridge B1a) and protein L5 of the 50S subunit (bridge B1b), connecting the 2 subunits; these bridges are implicated in subunit movement. Contacts the tRNAs in the A and P-sites. The protein is Small ribosomal subunit protein uS13 of Synechococcus sp. (strain CC9311).